Here is a 291-residue protein sequence, read N- to C-terminus: 4-diphosphocytidyl-2-C-methyl-D-erythritol kinase (291 aa).

Residue K11 is part of the active site. 95–105 contacts ATP; the sequence is PVAAGLAGGSS. Residue D137 is part of the active site.

Belongs to the GHMP kinase family. IspE subfamily.

It catalyses the reaction 4-CDP-2-C-methyl-D-erythritol + ATP = 4-CDP-2-C-methyl-D-erythritol 2-phosphate + ADP + H(+). Its pathway is isoprenoid biosynthesis; isopentenyl diphosphate biosynthesis via DXP pathway; isopentenyl diphosphate from 1-deoxy-D-xylulose 5-phosphate: step 3/6. In terms of biological role, catalyzes the phosphorylation of the position 2 hydroxy group of 4-diphosphocytidyl-2C-methyl-D-erythritol. The polypeptide is 4-diphosphocytidyl-2-C-methyl-D-erythritol kinase (Alkaliphilus metalliredigens (strain QYMF)).